The primary structure comprises 431 residues: Hydroxylamine reductase (431 aa).

[4Fe-4S] cluster-binding residues include Cys-5, Cys-8, Cys-17, and Cys-23. 8 residues coordinate hybrid [4Fe-2O-2S] cluster: His-131, Glu-155, Cys-199, Cys-286, Cys-314, Cys-339, Glu-373, and Lys-375. The residue at position 286 (Cys-286) is a Cysteine persulfide.

It belongs to the HCP family. The cofactor is [4Fe-4S] cluster. Requires hybrid [4Fe-2O-2S] cluster as cofactor.

The protein resides in the cytoplasm. It carries out the reaction A + NH4(+) + H2O = hydroxylamine + AH2 + H(+). Its function is as follows. Catalyzes the reduction of hydroxylamine to form NH(3) and H(2)O. This is Hydroxylamine reductase from Thermotoga petrophila (strain ATCC BAA-488 / DSM 13995 / JCM 10881 / RKU-1).